The sequence spans 602 residues: Elongation factor 4 (602 aa).

In terms of domain architecture, tr-type G spans 2-184; the sequence is NHIRNFSIIA…QIVAKVPAPR (183 aa). GTP-binding positions include 14–19 and 131–134; these read DHGKST and NKMD.

It belongs to the TRAFAC class translation factor GTPase superfamily. Classic translation factor GTPase family. LepA subfamily.

It is found in the cell inner membrane. It carries out the reaction GTP + H2O = GDP + phosphate + H(+). Its function is as follows. Required for accurate and efficient protein synthesis under certain stress conditions. May act as a fidelity factor of the translation reaction, by catalyzing a one-codon backward translocation of tRNAs on improperly translocated ribosomes. Back-translocation proceeds from a post-translocation (POST) complex to a pre-translocation (PRE) complex, thus giving elongation factor G a second chance to translocate the tRNAs correctly. Binds to ribosomes in a GTP-dependent manner. This Acidovorax ebreus (strain TPSY) (Diaphorobacter sp. (strain TPSY)) protein is Elongation factor 4.